The sequence spans 323 residues: tRNA-dihydrouridine(16) synthase (323 aa).

Residues 7–9 (PME) and glutamine 68 each bind FMN. Cysteine 98 (proton donor) is an active-site residue. FMN contacts are provided by residues lysine 139, 199–201 (NGE), and 223–224 (GR).

This sequence belongs to the Dus family. DusC subfamily. It depends on FMN as a cofactor.

The enzyme catalyses 5,6-dihydrouridine(16) in tRNA + NADP(+) = uridine(16) in tRNA + NADPH + H(+). It carries out the reaction 5,6-dihydrouridine(16) in tRNA + NAD(+) = uridine(16) in tRNA + NADH + H(+). In terms of biological role, catalyzes the synthesis of 5,6-dihydrouridine (D), a modified base found in the D-loop of most tRNAs, via the reduction of the C5-C6 double bond in target uridines. Specifically modifies U16 in tRNAs. In Pseudomonas putida (strain ATCC 47054 / DSM 6125 / CFBP 8728 / NCIMB 11950 / KT2440), this protein is tRNA-dihydrouridine(16) synthase.